Here is a 772-residue protein sequence, read N- to C-terminus: Phosphatidylinositol 4-phosphate 5-kinase 5 (772 aa).

The disordered stretch occupies residues 22-56; sequence AKKRANSVFGTVSVAPHTDNDTTTDDNDDETTTNR. The segment covering 43 to 52 has biased composition (acidic residues); the sequence is TTTDDNDDET. 8 MORN repeats span residues 75 to 97, 98 to 120, 121 to 143, 144 to 166, 167 to 189, 190 to 212, 213 to 235, and 236 to 257; these read YTGQ…DGCM, YIGD…SGAT, YEGE…SGDA, YKGQ…NGDA, YDGE…DGSY, YIGE…NGNR, YDGF…NGSF, and YVGH…SGNE. Residues 377 to 768 enclose the PIPK domain; it reads SKGHRNYELM…RFRDFIFKVF (392 aa). The tract at residues 646-665 is disordered; the sequence is SGARTPIGESEEESGPRLSR. The tract at residues 728-749 is activation loop; sequence YDISKKLEHAYKSIQYDPSSIS.

It carries out the reaction a 1,2-diacyl-sn-glycero-3-phospho-(1D-myo-inositol 4-phosphate) + ATP = a 1,2-diacyl-sn-glycero-3-phospho-(1D-myo-inositol-4,5-bisphosphate) + ADP + H(+). This is Phosphatidylinositol 4-phosphate 5-kinase 5 (PIP5K5) from Arabidopsis thaliana (Mouse-ear cress).